The following is a 447-amino-acid chain: Neuronal acetylcholine receptor subunit alpha-10 (447 aa).

The signal sequence occupies residues 1-24 (MGTRSHYLDLGFLLLLFLPAECLG). Over 25-237 (AEGRLAHKLF…FTLLLRRRAA (213 aa)) the chain is Extracellular. N-linked (GlcNAc...) asparagine glycosylation is found at asparagine 40 and asparagine 56. Disulfide bonds link cysteine 154–cysteine 168 and cysteine 218–cysteine 219. A run of 3 helical transmembrane segments spans residues 238 to 258 (AYVC…PLAF), 268 to 288 (VSLG…LAES), and 302 to 322 (YMAT…IMNL). Topologically, residues 323–425 (HYCGPNAHPV…WKRLARVMDR (103 aa)) are cytoplasmic. A helical membrane pass occupies residues 426 to 446 (FFLGIFFCMALVMSLIVLVQA).

The protein belongs to the ligand-gated ion channel (TC 1.A.9) family. Acetylcholine receptor (TC 1.A.9.1) subfamily. Alpha-10/CHRNA10 sub-subfamily. As to quaternary structure, forms homo- or heterooligomeric channels in conjunction with CHRNA10. The native outer hair cell receptor may be composed of CHRNA9:CHRNA10 heterooligomers. Found in the stoichiometric form (CHRNA9)2:(CHRNA10)3. In terms of tissue distribution, expressed in the outer hair cells of the cochlea and the neurons of dorsal root ganglia.

Its subcellular location is the synaptic cell membrane. The protein resides in the cell membrane. It carries out the reaction Ca(2+)(in) = Ca(2+)(out). It catalyses the reaction Mg(2+)(in) = Mg(2+)(out). The catalysed reaction is K(+)(in) = K(+)(out). The enzyme catalyses Na(+)(in) = Na(+)(out). Activated by a myriad of ligands such as acetylcholine. AChR activity is inhibited by the antagonist alpha-conotoxins RgIA and GeXXA, small disulfide-constrained peptides from cone snails. In terms of biological role, component of neuronal acetylcholine receptors (nAChRs) that function as pentameric, ligand-gated cation channels with high calcium permeability among other activities. nAChRs are excitatory neurotrasnmitter receptors formed by a collection of nAChR subunits known to mediate synaptic transmission in the nervous system and the neuromuscular junction. Each nAchR subunit confers differential attributes to channel properties, including activation, deactivation and desensitization kinetics, pH sensitivity, cation permeability, and binding to allosteric modulators. Forms heteropentamers with CHRNA9. Expressed in the inner ear, in sympathetic neurons and in other non-neuronal cells, such as skin keratinocytes and lymphocytes. nAChR formed by CHRNA9:CHRNA10 mediate central nervous system control of auditory and vestibular sensory processing. The channel is permeable to a range of divalent cations including calcium, the influx of which may activate a potassium current which hyperpolarizes the cell membrane. In the ear, mediates synaptic transmission between efferent olivocochlear fibers and hair cells of the cochlea, this may lead to a reduction in basilar membrane motion, altering the activity of auditory nerve fibers and reducing the range of dynamic hearing. This may protect against acoustic trauma. May also regulate keratinocyte adhesion. This is Neuronal acetylcholine receptor subunit alpha-10 (Chrna10) from Rattus norvegicus (Rat).